Consider the following 843-residue polypeptide: Protein P (843 aa).

A terminal protein domain (TP) region spans residues Met-1–Gln-177. Residues Glu-178–Leu-346 are spacer. The disordered stretch occupies residues Glu-284–Pro-308. Residues Glu-347–Gln-690 are polymerase/reverse transcriptase domain (RT). Residues Gln-357–Ile-600 enclose the Reverse transcriptase domain. Mg(2+) contacts are provided by Asp-429, Asp-551, and Asp-552.

Belongs to the hepadnaviridae P protein family.

It catalyses the reaction DNA(n) + a 2'-deoxyribonucleoside 5'-triphosphate = DNA(n+1) + diphosphate. It carries out the reaction Endonucleolytic cleavage to 5'-phosphomonoester.. Its activity is regulated as follows. Activated by host HSP70 and HSP40 in vitro to be able to bind the epsilon loop of the pgRNA. Because deletion of the RNase H region renders the protein partly chaperone-independent, the chaperones may be needed indirectly to relieve occlusion of the RNA-binding site by this domain. Inhibited by several reverse-transcriptase inhibitors: Lamivudine, Adefovir and Entecavir. Its function is as follows. Multifunctional enzyme that converts the viral RNA genome into dsDNA in viral cytoplasmic capsids. This enzyme displays a DNA polymerase activity that can copy either DNA or RNA templates, and a ribonuclease H (RNase H) activity that cleaves the RNA strand of RNA-DNA heteroduplexes in a partially processive 3'- to 5'-endonucleasic mode. Neo-synthesized pregenomic RNA (pgRNA) are encapsidated together with the P protein, and reverse-transcribed inside the nucleocapsid. Initiation of reverse-transcription occurs first by binding the epsilon loop on the pgRNA genome, and is initiated by protein priming, thereby the 5'-end of (-)DNA is covalently linked to P protein. Partial (+)DNA is synthesized from the (-)DNA template and generates the relaxed circular DNA (RC-DNA) genome. After budding and infection, the RC-DNA migrates in the nucleus, and is converted into a plasmid-like covalently closed circular DNA (cccDNA). The activity of P protein does not seem to be necessary for cccDNA generation, and is presumably released from (+)DNA by host nuclear DNA repair machinery. The sequence is that of Protein P from Homo sapiens (Human).